The following is a 590-amino-acid chain: Proline--tRNA ligase (590 aa).

It belongs to the class-II aminoacyl-tRNA synthetase family. ProS type 1 subfamily. Homodimer.

It is found in the cytoplasm. The catalysed reaction is tRNA(Pro) + L-proline + ATP = L-prolyl-tRNA(Pro) + AMP + diphosphate. In terms of biological role, catalyzes the attachment of proline to tRNA(Pro) in a two-step reaction: proline is first activated by ATP to form Pro-AMP and then transferred to the acceptor end of tRNA(Pro). As ProRS can inadvertently accommodate and process non-cognate amino acids such as alanine and cysteine, to avoid such errors it has two additional distinct editing activities against alanine. One activity is designated as 'pretransfer' editing and involves the tRNA(Pro)-independent hydrolysis of activated Ala-AMP. The other activity is designated 'posttransfer' editing and involves deacylation of mischarged Ala-tRNA(Pro). The misacylated Cys-tRNA(Pro) is not edited by ProRS. The protein is Proline--tRNA ligase of Clavibacter sepedonicus (Clavibacter michiganensis subsp. sepedonicus).